The primary structure comprises 95 residues: Aspartyl/glutamyl-tRNA(Asn/Gln) amidotransferase subunit C (95 aa).

It belongs to the GatC family. In terms of assembly, heterotrimer of A, B and C subunits.

It carries out the reaction L-glutamyl-tRNA(Gln) + L-glutamine + ATP + H2O = L-glutaminyl-tRNA(Gln) + L-glutamate + ADP + phosphate + H(+). The catalysed reaction is L-aspartyl-tRNA(Asn) + L-glutamine + ATP + H2O = L-asparaginyl-tRNA(Asn) + L-glutamate + ADP + phosphate + 2 H(+). Its function is as follows. Allows the formation of correctly charged Asn-tRNA(Asn) or Gln-tRNA(Gln) through the transamidation of misacylated Asp-tRNA(Asn) or Glu-tRNA(Gln) in organisms which lack either or both of asparaginyl-tRNA or glutaminyl-tRNA synthetases. The reaction takes place in the presence of glutamine and ATP through an activated phospho-Asp-tRNA(Asn) or phospho-Glu-tRNA(Gln). The chain is Aspartyl/glutamyl-tRNA(Asn/Gln) amidotransferase subunit C from Clostridium botulinum (strain ATCC 19397 / Type A).